The chain runs to 213 residues: Probable inactive serine/threonine-protein kinase DDB_G0280559 (213 aa).

A Protein kinase domain is found at 1–211 (MVLRYSYVFK…WNEIVNHSFF (211 aa)).

Belongs to the protein kinase superfamily. Ser/Thr protein kinase family.

This Dictyostelium discoideum (Social amoeba) protein is Probable inactive serine/threonine-protein kinase DDB_G0280559.